The chain runs to 1847 residues: Cilia- and flagella-associated protein 65 (1847 aa).

A helical membrane pass occupies residues 112–132 (FFTIIPQPIFLSPGITLTLPI). An MSP domain is found at 805–914 (DLKLDTHKSI…VHYRIRLVGM (110 aa)). Residues 1457 to 1483 (QRELMRQYHKELQEWNEEKARQEVEFT) are a coiled coil. The interval 1668–1721 (YEGRKSKEQEEDLFGKMPGGQEDDEEEEEDEEEAEEEEEEIEEEMSKDEEDIDK) is disordered. The span at 1688-1720 (QEDDEEEEEDEEEAEEEEEEIEEEMSKDEEDID) shows a compositional bias: acidic residues.

Belongs to the CFAP65 family. As to quaternary structure, interacts with CFAP47. In terms of tissue distribution, predominantly expressed in testis. Highly expressed in round and elongating spermatids. Expressed also in certain ciliated organs, such as the brain, lung and kidney.

It is found in the cell projection. The protein localises to the cilium. Its subcellular location is the flagellum membrane. The protein resides in the cytoplasmic vesicle. It localises to the secretory vesicle. It is found in the acrosome membrane. The protein localises to the cytoplasm. Its function is as follows. Plays a role in flagellar formation and sperm motility. This Mus musculus (Mouse) protein is Cilia- and flagella-associated protein 65.